The sequence spans 201 residues: Recombination protein RecR (201 aa).

The C4-type zinc-finger motif lies at 60 to 75; it reads CSCCGNVDTIDPCTVC. One can recognise a Toprim domain in the interval 83–178; that stretch reads SVIIVVEDVS…KITRLAHGVP (96 aa).

This sequence belongs to the RecR family.

In terms of biological role, may play a role in DNA repair. It seems to be involved in an RecBC-independent recombinational process of DNA repair. It may act with RecF and RecO. In Agrobacterium fabrum (strain C58 / ATCC 33970) (Agrobacterium tumefaciens (strain C58)), this protein is Recombination protein RecR.